The chain runs to 141 residues: Nucleoside diphosphate kinase (141 aa).

6 residues coordinate ATP: Lys11, Phe59, Arg87, Thr93, Arg104, and Asn114. His117 functions as the Pros-phosphohistidine intermediate in the catalytic mechanism.

It belongs to the NDK family. In terms of assembly, homotetramer. Mg(2+) is required as a cofactor.

The protein resides in the cytoplasm. It catalyses the reaction a 2'-deoxyribonucleoside 5'-diphosphate + ATP = a 2'-deoxyribonucleoside 5'-triphosphate + ADP. The enzyme catalyses a ribonucleoside 5'-diphosphate + ATP = a ribonucleoside 5'-triphosphate + ADP. In terms of biological role, major role in the synthesis of nucleoside triphosphates other than ATP. The ATP gamma phosphate is transferred to the NDP beta phosphate via a ping-pong mechanism, using a phosphorylated active-site intermediate. This Herminiimonas arsenicoxydans protein is Nucleoside diphosphate kinase.